We begin with the raw amino-acid sequence, 227 residues long: Phosphoribosylformylglycinamidine synthase subunit PurQ (227 aa).

Residues 3–225 form the Glutamine amidotransferase type-1 domain; the sequence is FAVIVFPGSN…LKQWRETYVV (223 aa). Residue Cys86 is the Nucleophile of the active site. Active-site residues include His194 and Glu196.

Part of the FGAM synthase complex composed of 1 PurL, 1 PurQ and 2 PurS subunits.

Its subcellular location is the cytoplasm. It carries out the reaction N(2)-formyl-N(1)-(5-phospho-beta-D-ribosyl)glycinamide + L-glutamine + ATP + H2O = 2-formamido-N(1)-(5-O-phospho-beta-D-ribosyl)acetamidine + L-glutamate + ADP + phosphate + H(+). It catalyses the reaction L-glutamine + H2O = L-glutamate + NH4(+). It participates in purine metabolism; IMP biosynthesis via de novo pathway; 5-amino-1-(5-phospho-D-ribosyl)imidazole from N(2)-formyl-N(1)-(5-phospho-D-ribosyl)glycinamide: step 1/2. Its function is as follows. Part of the phosphoribosylformylglycinamidine synthase complex involved in the purines biosynthetic pathway. Catalyzes the ATP-dependent conversion of formylglycinamide ribonucleotide (FGAR) and glutamine to yield formylglycinamidine ribonucleotide (FGAM) and glutamate. The FGAM synthase complex is composed of three subunits. PurQ produces an ammonia molecule by converting glutamine to glutamate. PurL transfers the ammonia molecule to FGAR to form FGAM in an ATP-dependent manner. PurS interacts with PurQ and PurL and is thought to assist in the transfer of the ammonia molecule from PurQ to PurL. The polypeptide is Phosphoribosylformylglycinamidine synthase subunit PurQ (Bacillus cereus (strain B4264)).